A 191-amino-acid chain; its full sequence is uncharacterized protein (191 aa).

This is an uncharacterized protein from Histophilus somni (Haemophilus somnus).